A 226-amino-acid chain; its full sequence is Cytidylate kinase (226 aa).

Gly10–Thr18 provides a ligand contact to ATP.

Belongs to the cytidylate kinase family. Type 1 subfamily.

Its subcellular location is the cytoplasm. It catalyses the reaction CMP + ATP = CDP + ADP. It carries out the reaction dCMP + ATP = dCDP + ADP. This Streptococcus uberis (strain ATCC BAA-854 / 0140J) protein is Cytidylate kinase.